A 283-amino-acid polypeptide reads, in one-letter code: Bifunctional protein FolD (283 aa).

Residues 165–167 (GAS) and Ser190 each bind NADP(+).

Belongs to the tetrahydrofolate dehydrogenase/cyclohydrolase family. As to quaternary structure, homodimer.

It catalyses the reaction (6R)-5,10-methylene-5,6,7,8-tetrahydrofolate + NADP(+) = (6R)-5,10-methenyltetrahydrofolate + NADPH. It carries out the reaction (6R)-5,10-methenyltetrahydrofolate + H2O = (6R)-10-formyltetrahydrofolate + H(+). Its pathway is one-carbon metabolism; tetrahydrofolate interconversion. Catalyzes the oxidation of 5,10-methylenetetrahydrofolate to 5,10-methenyltetrahydrofolate and then the hydrolysis of 5,10-methenyltetrahydrofolate to 10-formyltetrahydrofolate. The chain is Bifunctional protein FolD from Cupriavidus necator (strain ATCC 17699 / DSM 428 / KCTC 22496 / NCIMB 10442 / H16 / Stanier 337) (Ralstonia eutropha).